A 285-amino-acid chain; its full sequence is MLVVNNPAALREQIGQWRREGLTIAFVPTMGNLHQGHLTLVKEAHHHADKVVTSIFVNPMQFDKAEDLANYPRTLEQDCAALETAGVDMVFTPTPEIMYPQGLASHTFVEVPGLSGLLEGALRPGHFRGVSTVVTKLFNLVQPDVACFGQKDYQQLALIRKMVADMAMPIQIVGVPTVRAEDGLALSSRNGYLTTAERALAPELARTMNWIAEQIEAGDHHLPSLVAQASQRLDKAGFRTDAIDIVDAATLEAATDQSEQLVILMAAYLGKARLIDNRVVTLARS.

Position 30–37 (30–37 (MGNLHQGH)) interacts with ATP. The Proton donor role is filled by H37. Q61 is a binding site for (R)-pantoate. Q61 is a beta-alanine binding site. 149–152 (GQKD) provides a ligand contact to ATP. Residue Q155 coordinates (R)-pantoate. ATP contacts are provided by residues V178 and 186–189 (LSSR).

This sequence belongs to the pantothenate synthetase family. Homodimer.

The protein localises to the cytoplasm. It catalyses the reaction (R)-pantoate + beta-alanine + ATP = (R)-pantothenate + AMP + diphosphate + H(+). Its pathway is cofactor biosynthesis; (R)-pantothenate biosynthesis; (R)-pantothenate from (R)-pantoate and beta-alanine: step 1/1. In terms of biological role, catalyzes the condensation of pantoate with beta-alanine in an ATP-dependent reaction via a pantoyl-adenylate intermediate. The polypeptide is Pantothenate synthetase (Aeromonas hydrophila subsp. hydrophila (strain ATCC 7966 / DSM 30187 / BCRC 13018 / CCUG 14551 / JCM 1027 / KCTC 2358 / NCIMB 9240 / NCTC 8049)).